Consider the following 21-residue polypeptide: Conchiolin protein p20 (21 aa).

The span at Y1 to P14 shows a compositional bias: low complexity. A disordered region spans residues Y1–Y21.

The protein belongs to the N16 matrix protein family. As to quaternary structure, homooligomer; disulfide-linked. May also be disulfide-linked to insoluble organic matrix. According to PubMed:11250534, amino acids 4 and 11 may be sulfated or phosphorylated. By similarity with the N14 matrix protein, amino-acid 4 may be a cysteine involved in a disulfide bond. As to expression, component of conchiolin, the organic matrix of nacre. Is dispersed in calcium carbonate and also linked by disulfide bonds to the organic core of nacre.

Its subcellular location is the secreted. It is found in the extracellular space. It localises to the extracellular matrix. Functionally, may be specifically involved in the formation of the nacreous layer. In Pinctada maxima (Silver-lipped pearl oyster), this protein is Conchiolin protein p20.